Here is a 77-residue protein sequence, read N- to C-terminus: U11-lycotoxin-Ls1d (77 aa).

An N-terminal signal peptide occupies residues 1–20; sequence MKLIIFTGLVLFAIVSLIEA. The propeptide occupies 21-26; that stretch reads EEESGR.

Belongs to the neurotoxin 19 (CSTX) family. 10 (U11-Lctx) subfamily. Contains 4 disulfide bonds. As to expression, expressed by the venom gland.

The protein resides in the secreted. This chain is U11-lycotoxin-Ls1d, found in Lycosa singoriensis (Wolf spider).